A 520-amino-acid chain; its full sequence is Amine oxidase [flavin-containing] B (520 aa).

Ser2 carries the N-acetylserine modification. Residues 2–489 lie on the Cytoplasmic side of the membrane; that stretch reads SNKCDVIVVG…TFLERHLPSV (488 aa). At Lys52 the chain carries N6-acetyllysine. The residue at position 397 (Cys397) is an S-8alpha-FAD cysteine. Residues 490–516 traverse the membrane as a helical; Anchor for type IV membrane protein segment; sequence PGLLKLLGLTTILSATALGFLAHKKGL. Topologically, residues 517-520 are mitochondrial intermembrane; it reads FVRF.

The protein belongs to the flavin monoamine oxidase family. Monomer, homo- or heterodimer (containing two subunits of similar size). Each subunit contains a covalently bound flavin. Enzymatically active as monomer. FAD serves as cofactor.

Its subcellular location is the mitochondrion outer membrane. The enzyme catalyses a secondary aliphatic amine + O2 + H2O = a primary amine + an aldehyde + H2O2. It catalyses the reaction (R)-adrenaline + O2 + H2O = (R)-3,4-dihydroxymandelaldehyde + methylamine + H2O2. It carries out the reaction a primary methyl amine + O2 + H2O = an aldehyde + H2O2 + NH4(+). The catalysed reaction is dopamine + O2 + H2O = 3,4-dihydroxyphenylacetaldehyde + H2O2 + NH4(+). The enzyme catalyses tyramine + O2 + H2O = (4-hydroxyphenyl)acetaldehyde + H2O2 + NH4(+). It catalyses the reaction (R)-noradrenaline + O2 + H2O = (R)-3,4-dihydroxymandelaldehyde + H2O2 + NH4(+). It carries out the reaction benzylamine + O2 + H2O = benzaldehyde + H2O2 + NH4(+). The catalysed reaction is 2-phenylethylamine + O2 + H2O = 2-phenylacetaldehyde + H2O2 + NH4(+). The enzyme catalyses N-acetylputrescine + O2 + H2O = 4-acetamidobutanal + H2O2 + NH4(+). Functionally, catalyzes the oxidative deamination of primary and some secondary amines such as neurotransmitters, and exogenous amines including the tertiary amine, neurotoxin 1-methyl-4-phenyl-1,2,3,6-tetrahydropyridine (MPTP), with concomitant reduction of oxygen to hydrogen peroxide and participates in the metabolism of neuroactive and vasoactive amines in the central nervous system and peripheral tissues. Preferentially degrades benzylamine and phenylethylamine. The chain is Amine oxidase [flavin-containing] B from Rattus norvegicus (Rat).